We begin with the raw amino-acid sequence, 78 residues long: Acyl carrier protein (78 aa).

The Carrier domain maps to 2–77; it reads STIEERVKKI…AAIDYVKAHQ (76 aa). Ser-37 carries the O-(pantetheine 4'-phosphoryl)serine modification.

This sequence belongs to the acyl carrier protein (ACP) family. In terms of processing, 4'-phosphopantetheine is transferred from CoA to a specific serine of apo-ACP by AcpS. This modification is essential for activity because fatty acids are bound in thioester linkage to the sulfhydryl of the prosthetic group.

Its subcellular location is the cytoplasm. Its pathway is lipid metabolism; fatty acid biosynthesis. Carrier of the growing fatty acid chain in fatty acid biosynthesis. This chain is Acyl carrier protein, found in Pseudomonas putida (strain ATCC 47054 / DSM 6125 / CFBP 8728 / NCIMB 11950 / KT2440).